A 670-amino-acid polypeptide reads, in one-letter code: MSALLMLCAVLLLLGTPSRGARPWEPCTDLRPLDILAEVVPLNGATSGIRMVQVEGVRGLQFSATEPRTTSFPASRIFSSCDFFPEEFSIIVTLRVPNLPPKKNEYLLSLLAEERDTLLLGLRYSPTQLHFLFLSEDLAGAWQTRVSFWSPGLMDSRWHTLILAVSQGSFSLTTDCGLPVDIMADVSFPPTLSVRGARFFIGSRKRTKGLFTGVIRQLVLLPGSDATPQLCPSRNARLAELSIPQVLKRLTGKPDDNEVLNYPYEADMKVTLGSRPPCTKAEGAQFWFDAAQKGLYLCAGSEWVSVLAAKTKLDYVEEHQSLHTNSETLGIEVFSIPGVGLFAAAANRKARSAIYKWTDGKFVSYQNIATHQAQSWRHFTIGKKIFLAVANFGPNERGQEFSVIYKWSPRKLKFTLYQRIATHSARDWEAFEVDGEHFLVVANHREGDNHNIDSMVYRWNPSSQLFEANQSIATSGAYDWEFFTVGPYSFLVVANTFNGTSTQVHSHLYIWLVGAFQLFQSFLTFGAADWEVFHIGERIFLAVANSHSYDVQMQAQNDSYVLSSVIYELNITAQTFVKFQDIPTCSALDWEFFSVGEDHFLVVANSFDGNTFSVNSIIYRWQGYEGFVAVHKLPTFGCRDWEAFNTTAGSYLIYSSAKEPLSRVLKLRTG.

The signal sequence occupies residues 1 to 20 (MSALLMLCAVLLLLGTPSRG). Positions 59–278 (GLQFSATEPR…KVTLGSRPPC (220 aa)) constitute a Laminin G-like domain. 7 EAR repeats span residues 314–359 (DYVE…KWTD), 361–409 (KFVS…KWSP), 413–461 (KFTL…RWNP), 465–513 (LFEA…IWLV), 515–571 (AFQL…ELNI), 575–623 (TFVK…RWQG), and 626–669 (GFVA…KLRT). N-linked (GlcNAc...) asparagine glycosylation occurs at asparagine 498.

In terms of tissue distribution, in the organ of Corti, expression at postnatal day 1 (P1) is restricted to the basal region of the stereocilia of inner and outer hair cells (at protein level). Expressed in the organ of Corti at P1 and P7, in cochlear ganglion, stria vascularis and vestibular ends at P7, and in inferior colliculus, remaining brainstem, cerebellum, brain hemispheres and retina at P1, P7 and in the adult. Also detected in adult liver, lung, kidney, intestine and testis but not in heart or skeletal muscle.

Its subcellular location is the secreted. It localises to the cell surface. The protein resides in the cell projection. It is found in the stereocilium. In terms of biological role, plays a critical role in tooth and hair follicle morphogenesis through regulation of the Notch signaling pathway. May play a role in development or function of the auditory system. This chain is Thrombospondin-type laminin G domain and EAR repeat-containing protein, found in Mus musculus (Mouse).